Consider the following 741-residue polypeptide: Multifunctional procollagen lysine hydroxylase and glycosyltransferase LH3 (741 aa).

Residues 1 to 27 (MAASVPEPRLLLLLLLLLPPLPPVTSA) form the signal peptide. The segment at 28 to 293 (SDRPRGANPV…FCNLNRRTLP (266 aa)) is required for glycosyltransferase activity. Residue 47 to 49 (VAT) coordinates UDP. N66 is a glycosylation site (N-linked (GlcNAc...) asparagine). Residues D115, D118, and H256 each contribute to the Mn(2+) site. Residue 115 to 117 (DSY) participates in UDP binding. 259-262 (GPTK) provides a ligand contact to UDP. 2 cysteine pairs are disulfide-bonded: C282/C285 and C382/C388. The accessory region stretch occupies residues 298 to 523 (PPRVLLAVFV…EFGRLLSTSH (226 aa)). N551 carries N-linked (GlcNAc...) asparagine glycosylation. A disulfide bridge links C566 with C701. Positions 602 and 659 each coordinate 2-oxoglutarate. In terms of domain architecture, Fe2OG dioxygenase spans 650 to 741 (RAVMNFVVRY…RYIMVSFVDP (92 aa)). Fe cation-binding residues include H670 and D672. The segment at 675–718 (TFTLNVALNHKGVDYEGGGCRFLRYDCRVSSPRKGWALLHPGRL) is important for dimerization. 2-oxoglutarate is bound at residue N679. Residue H722 participates in Fe cation binding. 2-oxoglutarate is bound at residue R732.

In terms of assembly, homodimer. It depends on Fe(2+) as a cofactor. L-ascorbate is required as a cofactor. Requires Mn(2+) as cofactor. As to expression, detected in heart and bone.

Its subcellular location is the rough endoplasmic reticulum. The protein localises to the endoplasmic reticulum lumen. The protein resides in the endoplasmic reticulum membrane. It is found in the secreted. It localises to the extracellular space. The catalysed reaction is L-lysyl-[collagen] + 2-oxoglutarate + O2 = (5R)-5-hydroxy-L-lysyl-[collagen] + succinate + CO2. It catalyses the reaction (5R)-5-hydroxy-L-lysyl-[collagen] + UDP-alpha-D-galactose = (5R)-5-O-(beta-D-galactosyl)-5-hydroxy-L-lysyl-[collagen] + UDP + H(+). It carries out the reaction (5R)-5-O-(beta-D-galactosyl)-5-hydroxy-L-lysyl-[collagen] + UDP-alpha-D-glucose = (5R)-5-O-[alpha-D-glucosyl-(1-&gt;2)-beta-D-galactosyl]-5-hydroxy-L-lysyl-[collagen] + UDP + H(+). Multifunctional enzyme that catalyzes a series of post-translational modifications on Lys residues in procollagen. Plays a redundant role in catalyzing the formation of hydroxylysine residues in -Xaa-Lys-Gly- sequences in collagens. Plays a redundant role in catalyzing the transfer of galactose onto hydroxylysine groups, giving rise to galactosyl 5-hydroxylysine. Has an essential role by catalyzing the subsequent transfer of glucose moieties, giving rise to 1,2-glucosylgalactosyl-5-hydroxylysine residues. Catalyzes hydroxylation and glycosylation of Lys residues in the MBL1 collagen-like domain, giving rise to hydroxylysine and 1,2-glucosylgalactosyl-5-hydroxylysine residues. Catalyzes hydroxylation and glycosylation of Lys residues in the ADIPOQ collagen-like domain, giving rise to hydroxylysine and 1,2-glucosylgalactosyl-5-hydroxylysine residues. Essential for normal biosynthesis and secretion of type IV collagens. Essential for normal formation of basement membranes. The sequence is that of Multifunctional procollagen lysine hydroxylase and glycosyltransferase LH3 (Plod3) from Rattus norvegicus (Rat).